The primary structure comprises 149 residues: Large-conductance mechanosensitive channel (149 aa).

Transmembrane regions (helical) follow at residues 10-30 (FALKGNVMDLAVGVIIGGAFA), 41-61 (IMPIVAFIVGGEINFKNMFLI), and 87-107 (GSFITVLINFLILAFIIFMMV).

It belongs to the MscL family. Homopentamer.

It localises to the cell inner membrane. Its function is as follows. Channel that opens in response to stretch forces in the membrane lipid bilayer. May participate in the regulation of osmotic pressure changes within the cell. The polypeptide is Large-conductance mechanosensitive channel (Psychrobacter cryohalolentis (strain ATCC BAA-1226 / DSM 17306 / VKM B-2378 / K5)).